Here is a 271-residue protein sequence, read N- to C-terminus: PH domain-containing protein ECU06_0670 (271 aa).

A disordered region spans residues 26 to 145 (AKKTLDSSES…EKKNDAFIPP (120 aa)). 3 stretches are compositionally biased toward basic and acidic residues: residues 42-64 (EVGEVDEVKGMETDAEKKDEPAM), 92-120 (QPEKQEAADGEDSSKKESPREEQTPLLDK), and 128-140 (EENAKPSSEKKND). The PH domain maps to 166–267 (NTVVEGWMWK…WVEKLNETIR (102 aa)).

This chain is PH domain-containing protein ECU06_0670, found in Encephalitozoon cuniculi (strain GB-M1) (Microsporidian parasite).